A 209-amino-acid polypeptide reads, in one-letter code: Ribonuclease HII (209 aa).

The RNase H type-2 domain occupies 20-209 (DSEIGIDEVG…KSFLNKLNLI (190 aa)). The a divalent metal cation site is built by aspartate 26, glutamate 27, and aspartate 122.

It belongs to the RNase HII family. It depends on Mn(2+) as a cofactor. Mg(2+) is required as a cofactor.

It is found in the cytoplasm. The catalysed reaction is Endonucleolytic cleavage to 5'-phosphomonoester.. Its function is as follows. Endonuclease that specifically degrades the RNA of RNA-DNA hybrids. The polypeptide is Ribonuclease HII (Prochlorococcus marinus subsp. pastoris (strain CCMP1986 / NIES-2087 / MED4)).